We begin with the raw amino-acid sequence, 288 residues long: Transposase InsF for insertion sequence IS3fB (288 aa).

The Integrase catalytic domain maps to 124 to 287 (YASGPNQKWA…SPEQFENQNL (164 aa)).

The protein belongs to the transposase IS3/IS150/IS904 family.

In terms of biological role, involved in the transposition of the insertion sequence IS3. This chain is Transposase InsF for insertion sequence IS3fB (insF7), found in Escherichia coli (strain K12).